A 182-amino-acid polypeptide reads, in one-letter code: Isopentenyl-diphosphate Delta-isomerase (182 aa).

Mn(2+)-binding residues include His25 and His32. The region spanning 30 to 164 is the Nudix hydrolase domain; that stretch reads LLHLAFSSWL…PWAFSPWMVM (135 aa). Cys67 is a catalytic residue. His69 is a Mn(2+) binding site. Glu87 contacts Mg(2+). The Mn(2+) site is built by Glu114 and Glu116. Residue Glu116 is part of the active site.

The protein belongs to the IPP isomerase type 1 family. As to quaternary structure, homodimer. Mg(2+) is required as a cofactor. Requires Mn(2+) as cofactor.

The protein localises to the cytoplasm. It carries out the reaction isopentenyl diphosphate = dimethylallyl diphosphate. It functions in the pathway isoprenoid biosynthesis; dimethylallyl diphosphate biosynthesis; dimethylallyl diphosphate from isopentenyl diphosphate: step 1/1. Functionally, catalyzes the 1,3-allylic rearrangement of the homoallylic substrate isopentenyl (IPP) to its highly electrophilic allylic isomer, dimethylallyl diphosphate (DMAPP). This is Isopentenyl-diphosphate Delta-isomerase from Shigella boydii serotype 18 (strain CDC 3083-94 / BS512).